The primary structure comprises 1394 residues: DNA-directed RNA polymerase subunit beta'' (1394 aa).

C224, C295, C302, and C305 together coordinate Zn(2+).

The protein belongs to the RNA polymerase beta' chain family. RpoC2 subfamily. In terms of assembly, in plastids the minimal PEP RNA polymerase catalytic core is composed of four subunits: alpha, beta, beta', and beta''. When a (nuclear-encoded) sigma factor is associated with the core the holoenzyme is formed, which can initiate transcription. Zn(2+) is required as a cofactor.

It is found in the plastid. The protein resides in the chloroplast. The catalysed reaction is RNA(n) + a ribonucleoside 5'-triphosphate = RNA(n+1) + diphosphate. Functionally, DNA-dependent RNA polymerase catalyzes the transcription of DNA into RNA using the four ribonucleoside triphosphates as substrates. The sequence is that of DNA-directed RNA polymerase subunit beta'' from Cucumis sativus (Cucumber).